A 115-amino-acid chain; its full sequence is Mediator of RNA polymerase II transcription subunit 22 (115 aa).

It belongs to the Mediator complex subunit 22 family. Component of the Mediator complex.

Its subcellular location is the nucleus. In terms of biological role, component of the Mediator complex, a coactivator involved in the regulated transcription of nearly all RNA polymerase II-dependent genes. Mediator functions as a bridge to convey information from gene-specific regulatory proteins to the basal RNA polymerase II transcription machinery. Mediator is recruited to promoters by direct interactions with regulatory proteins and serves as a scaffold for the assembly of a functional preinitiation complex with RNA polymerase II and the general transcription factors. This is Mediator of RNA polymerase II transcription subunit 22 (SRB6) from Candida albicans (strain SC5314 / ATCC MYA-2876) (Yeast).